A 130-amino-acid chain; its full sequence is Large ribosomal subunit protein uL22 (130 aa).

The protein belongs to the universal ribosomal protein uL22 family. In terms of assembly, part of the 50S ribosomal subunit.

Functionally, this protein binds specifically to 23S rRNA; its binding is stimulated by other ribosomal proteins, e.g. L4, L17, and L20. It is important during the early stages of 50S assembly. It makes multiple contacts with different domains of the 23S rRNA in the assembled 50S subunit and ribosome. The globular domain of the protein is located near the polypeptide exit tunnel on the outside of the subunit, while an extended beta-hairpin is found that lines the wall of the exit tunnel in the center of the 70S ribosome. This is Large ribosomal subunit protein uL22 from Clavibacter sepedonicus (Clavibacter michiganensis subsp. sepedonicus).